The sequence spans 111 residues: Nucleoid-associated protein NGK_1136 (111 aa).

The protein belongs to the YbaB/EbfC family. Homodimer.

Its subcellular location is the cytoplasm. It localises to the nucleoid. Its function is as follows. Binds to DNA and alters its conformation. May be involved in regulation of gene expression, nucleoid organization and DNA protection. This is Nucleoid-associated protein NGK_1136 from Neisseria gonorrhoeae (strain NCCP11945).